The following is a 121-amino-acid chain: MARIAGVDLPRDKRIVIGLTYIFGIGNTTAQKILANAGVSEDIRVRDLTPDQEEKIRAEVDQIKVEGDLRREVSLNIKRLQEIGSYRGMRHRHGLPVRGQHTKNNARTRKGKAVAIAGKKK.

The interval 90–121 (RHRHGLPVRGQHTKNNARTRKGKAVAIAGKKK) is disordered.

The protein belongs to the universal ribosomal protein uS13 family. As to quaternary structure, part of the 30S ribosomal subunit. Forms a loose heterodimer with protein S19. Forms two bridges to the 50S subunit in the 70S ribosome.

Located at the top of the head of the 30S subunit, it contacts several helices of the 16S rRNA. In the 70S ribosome it contacts the 23S rRNA (bridge B1a) and protein L5 of the 50S subunit (bridge B1b), connecting the 2 subunits; these bridges are implicated in subunit movement. Contacts the tRNAs in the A and P-sites. In Limosilactobacillus fermentum (strain NBRC 3956 / LMG 18251) (Lactobacillus fermentum), this protein is Small ribosomal subunit protein uS13.